We begin with the raw amino-acid sequence, 184 residues long: Cathelicidin-related peptide Pt_CRAMP1 (184 aa).

The first 22 residues, 1-22, serve as a signal peptide directing secretion; sequence MEGFFWKTWLVVAAFAIGGTSS. Residues 23–150 constitute a propeptide that is removed on maturation; that stretch reads LPHKPLTYEE…EDEKDQPRRV (128 aa). Disulfide bonds link Cys-81–Cys-92 and Cys-103–Cys-120. Residues 125–144 show a composition bias toward acidic residues; that stretch reads EDEEQNQEEEEEEEKEEDEK. Residues 125 to 147 form a disordered region; it reads EDEEQNQEEEEEEEKEEDEKDQP.

Belongs to the cathelicidin family. Expressed by the venom gland.

It localises to the secreted. The protein resides in the target cell membrane. In terms of biological role, potent antimicrobial peptide against Gram-negative (MIC=2 ug/ml against E.coli ATCC 25922, MIC=8 ug/ml against P.aeruginosa) and Gram-positive bacteria (MIC=32 ug/ml against E.faecalis, MIC=32 ug/ml against S.aureus). Adopts an amphipathic alpha helical conformation, that may allow to partition into the target membrane. High hemolytic activities have been observed on mammalian cells. This is Cathelicidin-related peptide Pt_CRAMP1 from Pseudonaja textilis (Eastern brown snake).